The sequence spans 538 residues: Poly [ADP-ribose] polymerase 2 (538 aa).

In terms of domain architecture, WGR spans 1–94; it reads MSIINDENGR…RDDEPVPNKY (94 aa). The segment at 104–133 is disordered; that stretch reads RQTEKEVKKEEPEPEPKVDEKNTRGRKKRG. Positions 105–126 are enriched in basic and acidic residues; the sequence is QTEKEVKKEEPEPEPKVDEKNT. Positions 148–285 constitute a PARP alpha-helical domain; it reads VEEVNEKLKE…GSIEASLELK (138 aa). A PARP catalytic domain is found at 309 to 535; that stretch reads EPVSEEIAGK…VKVDRLTAKE (227 aa). Residues 357-381 are disordered; sequence QEVPKKRGRKSTKTAAPTVPPPTTK.

The protein belongs to the ARTD/PARP family.

Its subcellular location is the nucleus. The enzyme catalyses NAD(+) + (ADP-D-ribosyl)n-acceptor = nicotinamide + (ADP-D-ribosyl)n+1-acceptor + H(+).. It catalyses the reaction L-aspartyl-[protein] + NAD(+) = 4-O-(ADP-D-ribosyl)-L-aspartyl-[protein] + nicotinamide. The catalysed reaction is L-glutamyl-[protein] + NAD(+) = 5-O-(ADP-D-ribosyl)-L-glutamyl-[protein] + nicotinamide. With respect to regulation, inhibited by N-(6-oxo-5,6-dihydrophenanthridin-2-yl)-N,N-dimethylacetamide HCl (PJ34), 1,5-dihydroxyisoquinoline (DHQ) and 3-aminobenzamide (3AB). Its function is as follows. Poly[ADP-ribose] polymerase modifies various nuclear proteins by poly(ADP-ribosyl)ation, a post-translational modification synthesized after DNA damage that appears as an obligatory step in a detection/signaling pathway leading to the reparation of DNA strand breaks and programmed cell death. This is Poly [ADP-ribose] polymerase 2 from Caenorhabditis elegans.